The primary structure comprises 227 residues: Small ribosomal subunit protein uS3 (227 aa).

One can recognise a KH type-2 domain in the interval 39-109 (IHRFFEKLTR…KIVINVDAVD (71 aa)).

The protein belongs to the universal ribosomal protein uS3 family. As to quaternary structure, part of the 30S ribosomal subunit. Forms a tight complex with proteins S10 and S14.

In terms of biological role, binds the lower part of the 30S subunit head. Binds mRNA in the 70S ribosome, positioning it for translation. The protein is Small ribosomal subunit protein uS3 of Mesomycoplasma hyopneumoniae (strain 232) (Mycoplasma hyopneumoniae).